We begin with the raw amino-acid sequence, 47 residues long: Potassium channel toxin gamma-KTx 5.2 (47 aa).

4 cysteine pairs are disulfide-bonded: Cys5/Cys23, Cys11/Cys34, Cys20/Cys39, and Cys24/Cys41.

It belongs to the ergtoxin family. Gamma-KTx 5 subfamily. In terms of tissue distribution, expressed by the venom gland.

The protein resides in the secreted. Reversibly blocks Kv11/ERG potassium channels. This chain is Potassium channel toxin gamma-KTx 5.2, found in Centruroides gracilis (Slenderbrown scorpion).